A 187-amino-acid polypeptide reads, in one-letter code: CASP-like protein SELMODRAFT_416718 (187 aa).

Residues 1 to 21 (MMFGGVGMATLPLSLIFAFKN) traverse the membrane as a helical segment. At 22 to 100 (RPKCVITRAQ…EAFPQGEKAD (79 aa)) the chain is on the extracellular side. Residues 101–119 (TSWALTVLFYLAKLVFGIL) form a helical membrane-spanning segment. At 120–125 (GLALSV) the chain is on the cytoplasmic side. The chain crosses the membrane as a helical span at residues 126 to 145 (IWLLHIIVFMLVNPPAFPFL). The Extracellular portion of the chain corresponds to 146-155 (NQVFIQLDSA). A helical transmembrane segment spans residues 156–176 (WGLLGTTAFAIFCYYLVMSVI). The Cytoplasmic segment spans residues 177-187 (SGEMHSIYPMK).

The protein belongs to the Casparian strip membrane proteins (CASP) family. Homodimer and heterodimers.

The protein resides in the cell membrane. The sequence is that of CASP-like protein SELMODRAFT_416718 from Selaginella moellendorffii (Spikemoss).